The chain runs to 324 residues: Spheroidene monooxygenase (324 aa).

The interval G226 to A324 is disordered. Composition is skewed to low complexity over residues P248 to P278 and V287 to G313.

Belongs to the CrtA family. Requires heme as cofactor.

It catalyses the reaction spheroidene + 4 reduced [2Fe-2S]-[ferredoxin] + 2 O2 + 4 H(+) = spheroiden-2-one + 4 oxidized [2Fe-2S]-[ferredoxin] + 3 H2O. It carries out the reaction spheroidene + 2 reduced [2Fe-2S]-[ferredoxin] + O2 + 2 H(+) = 2-hydroxyspheroidene + 2 oxidized [2Fe-2S]-[ferredoxin] + H2O. The catalysed reaction is 2-hydroxyspheroidene + 2 reduced [2Fe-2S]-[ferredoxin] + O2 + 2 H(+) = 2,2-dihydroxyspheroidene + 2 oxidized [2Fe-2S]-[ferredoxin] + H2O. The enzyme catalyses 2,2-dihydroxyspheroidene = spheroiden-2-one + H2O. It participates in carotenoid biosynthesis; spheroidene biosynthesis. Functionally, involved in the biosynthesis of the carotenoid spheroidene. Catalyzes the introduction of one keto group at the C-2 position of spheroidene. In vitro, can use nonnative substrates and produce oxocarotenoids with a hydroxy and/or a keto group, derived from neurosporene, lycopene, 3,4-didehydrolycopene or 3,4,3',4'-tetradehydrolycopene. This Cereibacter sphaeroides (strain ATCC 17023 / DSM 158 / JCM 6121 / CCUG 31486 / LMG 2827 / NBRC 12203 / NCIMB 8253 / ATH 2.4.1.) (Rhodobacter sphaeroides) protein is Spheroidene monooxygenase.